We begin with the raw amino-acid sequence, 172 residues long: Trypsin inhibitor DE-3 (172 aa).

Intrachain disulfides connect cysteine 39–cysteine 83 and cysteine 132–cysteine 139.

This sequence belongs to the protease inhibitor I3 (leguminous Kunitz-type inhibitor) family.

Functionally, inhibition of trypsin. This is Trypsin inhibitor DE-3 from Erythrina caffra (Kaffir tree).